The primary structure comprises 83 residues: uncharacterized protein (83 aa).

Helical transmembrane passes span 7–26 (FARF…IVSY), 36–58 (LSPL…ILPF), and 65–82 (ILTV…YLAF).

It is found in the cell membrane. This is an uncharacterized protein from Archaeoglobus fulgidus (strain ATCC 49558 / DSM 4304 / JCM 9628 / NBRC 100126 / VC-16).